A 225-amino-acid chain; its full sequence is Potassium-transporting ATPase KdpC subunit (225 aa).

A helical transmembrane segment spans residues 18-38 (ALLVLTVVTGIVYPLVVTGVA). Residues 134–161 (NSVPGHPVRPEDVPADAVTSSGSGLDPD) are disordered.

It belongs to the KdpC family. As to quaternary structure, the system is composed of three essential subunits: KdpA, KdpB and KdpC.

Its subcellular location is the cell membrane. In terms of biological role, part of the high-affinity ATP-driven potassium transport (or Kdp) system, which catalyzes the hydrolysis of ATP coupled with the electrogenic transport of potassium into the cytoplasm. This subunit acts as a catalytic chaperone that increases the ATP-binding affinity of the ATP-hydrolyzing subunit KdpB by the formation of a transient KdpB/KdpC/ATP ternary complex. The chain is Potassium-transporting ATPase KdpC subunit from Streptomyces coelicolor (strain ATCC BAA-471 / A3(2) / M145).